A 155-amino-acid chain; its full sequence is Endoribonuclease YbeY (155 aa).

Residues His-114, His-118, and His-124 each contribute to the Zn(2+) site.

The protein belongs to the endoribonuclease YbeY family. Zn(2+) serves as cofactor.

The protein resides in the cytoplasm. In terms of biological role, single strand-specific metallo-endoribonuclease involved in late-stage 70S ribosome quality control and in maturation of the 3' terminus of the 16S rRNA. The polypeptide is Endoribonuclease YbeY (Escherichia coli O17:K52:H18 (strain UMN026 / ExPEC)).